A 36-amino-acid polypeptide reads, in one-letter code: QKKCPGRCTLKCGKHERPTLPYNCGKYICCVPVKVK.

Pyrrolidone carboxylic acid is present on Gln1. Cystine bridges form between Cys4-Cys30, Cys8-Cys29, and Cys12-Cys24.

The protein belongs to the beta-defensin family. In terms of assembly, monomer. As to expression, detected in egg white (at protein level).

It localises to the secreted. Functionally, antibacterial and antiviral peptide. Has strong inhibitory activity towards E.coli and S.typhimurium. Has significant antiviral activity against Chandipura virus. The polypeptide is Defensin-like turtle egg white protein TEWP (Caretta caretta (Loggerhead sea turtle)).